The primary structure comprises 469 residues: Transcription factor phomD (469 aa).

Residues 14 to 41 (CNACNESKVRCSQRKPTCARCERNGVEC) constitute a DNA-binding region (zn(2)-C6 fungal-type). The disordered stretch occupies residues 49–118 (THKDAPPISM…QQKEEAAAAA (70 aa)). Residues 82 to 93 (KANSNSSSNWHM) show a composition bias toward polar residues. Low complexity predominate over residues 104–118 (QQQQQQQKEEAAAAA).

Its subcellular location is the nucleus. Transcription factor; part of the gene cluster that mediates the biosynthesis of the phomopsins, a group of hexapeptide mycotoxins which infects lupins and causes lupinosis disease in livestock. May play a role in the regulation of the production of phomopsins. The sequence is that of Transcription factor phomD from Diaporthe leptostromiformis (Lupinosis disease fungus).